Consider the following 323-residue polypeptide: Beta-ketoacyl-[acyl-carrier-protein] synthase III (323 aa).

Residues cysteine 114 and histidine 250 contribute to the active site. Positions 251 to 255 (QANIR) are ACP-binding. Residue asparagine 280 is part of the active site.

Belongs to the thiolase-like superfamily. FabH family. In terms of assembly, homodimer.

It is found in the cytoplasm. It carries out the reaction malonyl-[ACP] + acetyl-CoA + H(+) = 3-oxobutanoyl-[ACP] + CO2 + CoA. It functions in the pathway lipid metabolism; fatty acid biosynthesis. Its function is as follows. Catalyzes the condensation reaction of fatty acid synthesis by the addition to an acyl acceptor of two carbons from malonyl-ACP. Catalyzes the first condensation reaction which initiates fatty acid synthesis and may therefore play a role in governing the total rate of fatty acid production. Possesses both acetoacetyl-ACP synthase and acetyl transacylase activities. Its substrate specificity determines the biosynthesis of branched-chain and/or straight-chain of fatty acids. This Ruegeria pomeroyi (strain ATCC 700808 / DSM 15171 / DSS-3) (Silicibacter pomeroyi) protein is Beta-ketoacyl-[acyl-carrier-protein] synthase III.